The sequence spans 212 residues: ATP-dependent Clp protease proteolytic subunit (212 aa).

Ser107 serves as the catalytic Nucleophile. His132 is a catalytic residue.

The protein belongs to the peptidase S14 family. Fourteen ClpP subunits assemble into 2 heptameric rings which stack back to back to give a disk-like structure with a central cavity, resembling the structure of eukaryotic proteasomes.

It localises to the cytoplasm. It carries out the reaction Hydrolysis of proteins to small peptides in the presence of ATP and magnesium. alpha-casein is the usual test substrate. In the absence of ATP, only oligopeptides shorter than five residues are hydrolyzed (such as succinyl-Leu-Tyr-|-NHMec, and Leu-Tyr-Leu-|-Tyr-Trp, in which cleavage of the -Tyr-|-Leu- and -Tyr-|-Trp bonds also occurs).. Functionally, cleaves peptides in various proteins in a process that requires ATP hydrolysis. Has a chymotrypsin-like activity. Plays a major role in the degradation of misfolded proteins. In Pseudoalteromonas atlantica (strain T6c / ATCC BAA-1087), this protein is ATP-dependent Clp protease proteolytic subunit.